A 156-amino-acid polypeptide reads, in one-letter code: Transcription factor MafK (156 aa).

Residues 1–21 (MTTNPKPNKALKVKEESGENA) form a disordered region. A basic motif region spans residues 51-76 (RLKQRRRTLKNRGYAASCRIKRVTQK). The bZIP domain occupies 51 to 114 (RLKQRRRTLK…DALRSKYEAL (64 aa)). The leucine-zipper stretch occupies residues 79–93 (LERQRVELQQEVEKL).

Belongs to the bZIP family. Maf subfamily. As to quaternary structure, homodimer or heterodimer.

The protein resides in the nucleus. In terms of biological role, since they lack a putative transactivation domain, the small Mafs behave as transcriptional repressors when they dimerize among themselves. However, they act as transcriptional activators by dimerizing with other (usually larger) basic-zipper proteins and recruiting them to specific DNA-binding sites. Small Maf proteins heterodimerize with Fos and may act as competitive repressors of the NF-E2 transcription factor. The sequence is that of Transcription factor MafK (MAFK) from Gallus gallus (Chicken).